The following is a 119-amino-acid chain: Small ribosomal subunit protein uS10 (119 aa).

It belongs to the universal ribosomal protein uS10 family. In terms of assembly, component of the 40S small ribosomal subunit.

It is found in the cytoplasm. Component of the small ribosomal subunit. The ribosome is a large ribonucleoprotein complex responsible for the synthesis of proteins in the cell. This is Small ribosomal subunit protein uS10 (rps20) from Xenopus laevis (African clawed frog).